A 369-amino-acid polypeptide reads, in one-letter code: Transcription factor GTE6 (369 aa).

A Bromo domain is found at 89-198 (KRMQDLMRQF…EKFEEKWAHF (110 aa)). Residues 201–263 (KVQEEEKIRE…VERCRKITIE (63 aa)) adopt a coiled-coil conformation. The 82-residue stretch at 250–331 (MRKVVERCRK…DALDNAMKKK (82 aa)) folds into the NET domain. Residues 329–348 (KKKKEEETKTRELSGAQKKE) show a composition bias toward basic and acidic residues. The segment at 329–369 (KKKKEEETKTRELSGAQKKEVSKKRNATTKLAERKTKRSRI) is disordered. The Bipartite nuclear localization signal motif lies at 351–368 (KKRNATTKLAERKTKRSR).

As to expression, abundantly expressed in flowers. Weakly expressed in roots, leaves and siliques; and undetectable in 5-day-old seedlings. In the basal rosette leaves of 21-day-old plants, it is more abundant in leaves 6 and 7, which possess narrow elliptical laminae, than in leaves 1-4, which have round laminae, suggesting a possible correlation between its expression and the formation of elliptical leaf laminae in mature leaves.

The protein localises to the nucleus. In terms of biological role, regulates differences in leaf patterning between juvenile and mature leaves by controlling differences in the development of primordia produced during juvenile and mature phases. Acts by activating transcription of the myb-domain protein AS1, a gene involved in leaf-axis specification. Associates with the promoter and the start of the transcribed region of AS1 and up-regulates expression of AS1 through acetylation of histones H3 and H4. In Arabidopsis thaliana (Mouse-ear cress), this protein is Transcription factor GTE6 (GTE6).